We begin with the raw amino-acid sequence, 380 residues long: Lipid-A-disaccharide synthase (380 aa).

The protein belongs to the LpxB family.

The enzyme catalyses a lipid X + a UDP-2-N,3-O-bis[(3R)-3-hydroxyacyl]-alpha-D-glucosamine = a lipid A disaccharide + UDP + H(+). The protein operates within bacterial outer membrane biogenesis; LPS lipid A biosynthesis. Condensation of UDP-2,3-diacylglucosamine and 2,3-diacylglucosamine-1-phosphate to form lipid A disaccharide, a precursor of lipid A, a phosphorylated glycolipid that anchors the lipopolysaccharide to the outer membrane of the cell. In Francisella tularensis subsp. novicida (strain U112), this protein is Lipid-A-disaccharide synthase.